A 257-amino-acid polypeptide reads, in one-letter code: NAD-capped RNA hydrolase NudC (257 aa).

Residue Arg-69 participates in substrate binding. Zn(2+)-binding residues include Cys-98 and Cys-101. Residue Glu-111 participates in substrate binding. Zn(2+) is bound by residues Cys-116 and Cys-119. Tyr-124 provides a ligand contact to substrate. The Nudix hydrolase domain maps to 125-248; it reads PQIAPCIIVA…TVARRLIEDT (124 aa). The a divalent metal cation site is built by Ala-158, Glu-174, and Glu-178. Positions 159–180 match the Nudix box motif; sequence GFVEVGETLEQAVAREVMEESG. A substrate-binding site is contributed by 192–199; the sequence is QPWPFPQS. Glu-219 lines the a divalent metal cation pocket. Ala-241 is a substrate binding site.

It belongs to the Nudix hydrolase family. NudC subfamily. As to quaternary structure, homodimer. Mg(2+) is required as a cofactor. The cofactor is Mn(2+). It depends on Zn(2+) as a cofactor.

The catalysed reaction is a 5'-end NAD(+)-phospho-ribonucleoside in mRNA + H2O = a 5'-end phospho-adenosine-phospho-ribonucleoside in mRNA + beta-nicotinamide D-ribonucleotide + 2 H(+). It carries out the reaction NAD(+) + H2O = beta-nicotinamide D-ribonucleotide + AMP + 2 H(+). The enzyme catalyses NADH + H2O = reduced beta-nicotinamide D-ribonucleotide + AMP + 2 H(+). Functionally, mRNA decapping enzyme that specifically removes the nicotinamide adenine dinucleotide (NAD) cap from a subset of mRNAs by hydrolyzing the diphosphate linkage to produce nicotinamide mononucleotide (NMN) and 5' monophosphate mRNA. The NAD-cap is present at the 5'-end of some mRNAs and stabilizes RNA against 5'-processing. Has preference for mRNAs with a 5'-end purine. Catalyzes the hydrolysis of a broad range of dinucleotide pyrophosphates. This Salmonella agona (strain SL483) protein is NAD-capped RNA hydrolase NudC.